The sequence spans 284 residues: Ribosomal RNA small subunit methyltransferase A (284 aa).

Residues H23, L25, G50, E71, D92, and N121 each coordinate S-adenosyl-L-methionine.

Belongs to the class I-like SAM-binding methyltransferase superfamily. rRNA adenine N(6)-methyltransferase family. RsmA subfamily.

The protein localises to the cytoplasm. The catalysed reaction is adenosine(1518)/adenosine(1519) in 16S rRNA + 4 S-adenosyl-L-methionine = N(6)-dimethyladenosine(1518)/N(6)-dimethyladenosine(1519) in 16S rRNA + 4 S-adenosyl-L-homocysteine + 4 H(+). Its function is as follows. Specifically dimethylates two adjacent adenosines (A1518 and A1519) in the loop of a conserved hairpin near the 3'-end of 16S rRNA in the 30S particle. May play a critical role in biogenesis of 30S subunits. This Verminephrobacter eiseniae (strain EF01-2) protein is Ribosomal RNA small subunit methyltransferase A.